Here is a 173-residue protein sequence, read N- to C-terminus: Crossover junction endodeoxyribonuclease RuvC (173 aa).

Active-site residues include Asp8, Glu67, and Asp139. Residues Asp8, Glu67, and Asp139 each coordinate Mg(2+).

This sequence belongs to the RuvC family. Homodimer which binds Holliday junction (HJ) DNA. The HJ becomes 2-fold symmetrical on binding to RuvC with unstacked arms; it has a different conformation from HJ DNA in complex with RuvA. In the full resolvosome a probable DNA-RuvA(4)-RuvB(12)-RuvC(2) complex forms which resolves the HJ. Mg(2+) serves as cofactor.

The protein resides in the cytoplasm. It carries out the reaction Endonucleolytic cleavage at a junction such as a reciprocal single-stranded crossover between two homologous DNA duplexes (Holliday junction).. Its function is as follows. The RuvA-RuvB-RuvC complex processes Holliday junction (HJ) DNA during genetic recombination and DNA repair. Endonuclease that resolves HJ intermediates. Cleaves cruciform DNA by making single-stranded nicks across the HJ at symmetrical positions within the homologous arms, yielding a 5'-phosphate and a 3'-hydroxyl group; requires a central core of homology in the junction. The consensus cleavage sequence is 5'-(A/T)TT(C/G)-3'. Cleavage occurs on the 3'-side of the TT dinucleotide at the point of strand exchange. HJ branch migration catalyzed by RuvA-RuvB allows RuvC to scan DNA until it finds its consensus sequence, where it cleaves and resolves the cruciform DNA. In Enterobacter sp. (strain 638), this protein is Crossover junction endodeoxyribonuclease RuvC.